A 338-amino-acid chain; its full sequence is 4-hydroxythreonine-4-phosphate dehydrogenase (338 aa).

Substrate-binding residues include His-136 and Thr-137. Residues His-173, His-218, and His-273 each contribute to the a divalent metal cation site. Positions 281, 290, and 299 each coordinate substrate.

The protein belongs to the PdxA family. As to quaternary structure, homodimer. Zn(2+) serves as cofactor. Mg(2+) is required as a cofactor. Requires Co(2+) as cofactor.

Its subcellular location is the cytoplasm. The catalysed reaction is 4-(phosphooxy)-L-threonine + NAD(+) = 3-amino-2-oxopropyl phosphate + CO2 + NADH. It functions in the pathway cofactor biosynthesis; pyridoxine 5'-phosphate biosynthesis; pyridoxine 5'-phosphate from D-erythrose 4-phosphate: step 4/5. Its function is as follows. Catalyzes the NAD(P)-dependent oxidation of 4-(phosphooxy)-L-threonine (HTP) into 2-amino-3-oxo-4-(phosphooxy)butyric acid which spontaneously decarboxylates to form 3-amino-2-oxopropyl phosphate (AHAP). This Ralstonia nicotianae (strain ATCC BAA-1114 / GMI1000) (Ralstonia solanacearum) protein is 4-hydroxythreonine-4-phosphate dehydrogenase.